The chain runs to 232 residues: Ion-translocating oxidoreductase complex subunit E (232 aa).

The next 6 helical transmembrane spans lie at 18-38 (GLVQ…LTNA), 39-59 (LGLG…VSLV), 69-89 (IPVF…VINA), 93-113 (GLYL…VIIG), 128-148 (AFDG…LGAV), and 182-202 (SFLL…LIAG).

This sequence belongs to the NqrDE/RnfAE family. In terms of assembly, the complex is composed of six subunits: RnfA, RnfB, RnfC, RnfD, RnfE and RnfG.

Its subcellular location is the cell inner membrane. In terms of biological role, part of a membrane-bound complex that couples electron transfer with translocation of ions across the membrane. The protein is Ion-translocating oxidoreductase complex subunit E of Shewanella amazonensis (strain ATCC BAA-1098 / SB2B).